Here is a 400-residue protein sequence, read N- to C-terminus: MLEFFSRLSLVTKIIIAIILGIGVALLFPTVTPYLSLFGELFIKALKSVAPILVFVLVLSSIANFQVGHSANLRPVLLLYVVGMLLAAFSAVIASLSFPSTLYLNTVSHNNLQAPGSLADILKNLLLSFIANPVQAISEANFIGILAWAIGLGLAMRHSSDTTKQVMQDVSHAVSAIIHKVIAFAPVGIFGLVAVTFADAGLATLESYAQLLVVLLGTMLFVALVINPILVGLTIRGNPYPLVFKCLKESGITAFFTRSSAANIPVNLDLAERLGVNPSTASVSIPLGATVNMAGAAVTITVLTLATVHTLGIHVDLATMIILSVVATISACGASGVAGGSLLLIPVACSLFGISSEIAMQVVAVGMIISVLQDSTETALNSSTDVLFTAAVDIRSRQNS.

9 helical membrane passes run 14–34 (IIIA…VTPY), 48–68 (SVAP…FQVG), 76–96 (VLLL…IASL), 136–156 (AISE…GLAM), 177–197 (IIHK…AVTF), 211–231 (LLVV…PILV), 285–305 (IPLG…VLTL), 311–331 (LGIH…TISA), and 349–371 (CSLF…IISV).

The protein belongs to the dicarboxylate/amino acid:cation symporter (DAACS) (TC 2.A.23) family.

Its subcellular location is the cell inner membrane. It catalyses the reaction L-serine(in) + Na(+)(in) = L-serine(out) + Na(+)(out). The enzyme catalyses L-threonine(in) + Na(+)(in) = L-threonine(out) + Na(+)(out). In terms of biological role, involved in the import of serine and threonine into the cell, with the concomitant import of sodium (symport system). This is Serine/threonine transporter SstT from Acinetobacter baumannii (strain AB307-0294).